A 664-amino-acid polypeptide reads, in one-letter code: NADH-ubiquinone oxidoreductase chain 5 (664 aa).

Helical transmembrane passes span 2 to 22, 28 to 48, 77 to 97, 120 to 140, 168 to 188, 210 to 230, 250 to 270, 285 to 305, 321 to 341, 342 to 362, 376 to 396, 424 to 444, 462 to 482, 521 to 541, 590 to 610, 614 to 634, and 639 to 659; these read LLLT…LFGF, GSVF…LIII, FLFD…STLV, LFTF…MFVG, AMLV…TIFY, FIFF…IFIG, GPTP…GVYL, LKII…VGLV, LGYM…FHLS, NHAY…HAMG, ILPF…GFPF, LGTI…FFAF, PLEM…IGYI, LPVI…FFKF, IDKG…FSFL, IILL…ISTI, and IIFF…FLFI.

Belongs to the complex I subunit 5 family.

Its subcellular location is the mitochondrion inner membrane. The enzyme catalyses a ubiquinone + NADH + 5 H(+)(in) = a ubiquinol + NAD(+) + 4 H(+)(out). Functionally, core subunit of the mitochondrial membrane respiratory chain NADH dehydrogenase (Complex I) that is believed to belong to the minimal assembly required for catalysis. Complex I functions in the transfer of electrons from NADH to the respiratory chain. The immediate electron acceptor for the enzyme is believed to be ubiquinone. The protein is NADH-ubiquinone oxidoreductase chain 5 (ND5) of Phytophthora infestans (Potato late blight agent).